We begin with the raw amino-acid sequence, 184 residues long: ADP-ribosylation factor-like protein 2 (184 aa).

G2 carries N-myristoyl glycine lipidation. Residues G23–T30, D66–Q70, and N125–D128 each bind GTP.

The protein belongs to the small GTPase superfamily. Arf family.

May be involved in trafficking events within the endosomal system. The chain is ADP-ribosylation factor-like protein 2 (arl2) from Dictyostelium discoideum (Social amoeba).